A 346-amino-acid chain; its full sequence is 3 beta-hydroxysteroid dehydrogenase/Delta 5--&gt;4-isomerase (346 aa).

Residue Tyr-147 is the Proton acceptor of the active site. Position 151 (Lys-151) interacts with NAD(+).

It belongs to the 3-beta-HSD family.

The catalysed reaction is a 3beta-hydroxy-Delta(5)-steroid + NAD(+) = a 3-oxo-Delta(5)-steroid + NADH + H(+). It carries out the reaction a 3-oxo-Delta(5)-steroid = a 3-oxo-Delta(4)-steroid. It functions in the pathway lipid metabolism; steroid biosynthesis. In terms of biological role, catalyzes the oxidative conversion of Delta(5)-ene-3-beta-hydroxy steroid, and the oxidative conversion of ketosteroids. The 3-beta-HSD enzymatic system plays a crucial role in the biosynthesis of all classes of hormonal steroids. During viral infection, steroid production contributes to virulence by inhibiting the host inflammatory response. The chain is 3 beta-hydroxysteroid dehydrogenase/Delta 5--&gt;4-isomerase (OPG174) from Monkeypox virus.